The primary structure comprises 135 residues: DNA-directed RNA polymerase subunit omega (135 aa).

A disordered region spans residues 107–135; sequence ASQESQDYEVDGEIDDEINDQDGDEEVSV. The segment covering 112 to 135 has biased composition (acidic residues); sequence QDYEVDGEIDDEINDQDGDEEVSV.

The protein belongs to the RNA polymerase subunit omega family. The RNAP catalytic core consists of 2 alpha, 1 beta, 1 beta' and 1 omega subunit. When a sigma factor is associated with the core the holoenzyme is formed, which can initiate transcription.

The enzyme catalyses RNA(n) + a ribonucleoside 5'-triphosphate = RNA(n+1) + diphosphate. Its function is as follows. Promotes RNA polymerase assembly. Latches the N- and C-terminal regions of the beta' subunit thereby facilitating its interaction with the beta and alpha subunits. This chain is DNA-directed RNA polymerase subunit omega, found in Wolbachia pipientis wMel.